The chain runs to 368 residues: uncharacterized protein (368 aa).

5 helical membrane-spanning segments follow: residues 22-42 (VAGIPLYKIIIASAIMLFTLI), 74-94 (FVKPFSYFIVVFGFYLSLLVL), 104-124 (FLKTFSLLILGWAIIRFLNLF), 144-164 (VGDFILKILKAFVVVIVGASL), and 168-188 (WGVNIGAILASVGLLGLAVSL).

Belongs to the MscS (TC 1.A.23) family.

The protein resides in the cell membrane. This is an uncharacterized protein from Aquifex aeolicus (strain VF5).